The primary structure comprises 221 residues: Orotidine 5'-phosphate decarboxylase (221 aa).

Substrate contacts are provided by residues aspartate 12, lysine 34, 60-69, serine 117, 170-180, glycine 193, and arginine 194; these read DFKVADIPNT and PGVGAQGGKAS. Lysine 62 serves as the catalytic Proton donor.

The protein belongs to the OMP decarboxylase family. Type 1 subfamily. In terms of assembly, homodimer.

The enzyme catalyses orotidine 5'-phosphate + H(+) = UMP + CO2. It participates in pyrimidine metabolism; UMP biosynthesis via de novo pathway; UMP from orotate: step 2/2. Its function is as follows. Catalyzes the decarboxylation of orotidine 5'-monophosphate (OMP) to uridine 5'-monophosphate (UMP). In Methanosarcina acetivorans (strain ATCC 35395 / DSM 2834 / JCM 12185 / C2A), this protein is Orotidine 5'-phosphate decarboxylase.